The following is a 505-amino-acid chain: RNA-splicing ligase RtcB homolog (505 aa).

Mn(2+)-binding residues include D119, C122, H227, H259, and H353. GMP is bound at residue 226–230 (NHYAE). GMP-binding positions include 353-354 (HN), 402-405 (GGTM), S409, 428-431 (HGAG), and K504. The active-site GMP-histidine intermediate is the H428.

It belongs to the RtcB family. In terms of assembly, catalytic component of the tRNA-splicing ligase complex. It depends on Mn(2+) as a cofactor.

It is found in the nucleus. It localises to the cytoplasm. The catalysed reaction is a 3'-end 3'-phospho-ribonucleotide-RNA + a 5'-end dephospho-ribonucleoside-RNA + GTP = a ribonucleotidyl-ribonucleotide-RNA + GMP + diphosphate. It catalyses the reaction a 3'-end 2',3'-cyclophospho-ribonucleotide-RNA + a 5'-end dephospho-ribonucleoside-RNA + GTP + H2O = a ribonucleotidyl-ribonucleotide-RNA + GMP + diphosphate + H(+). Functionally, catalytic subunit of the tRNA-splicing ligase complex that acts by directly joining spliced tRNA halves to mature-sized tRNAs by incorporating the precursor-derived splice junction phosphate into the mature tRNA as a canonical 3',5'-phosphodiester. May act as an RNA ligase with broad substrate specificity, and may function toward other RNAs. The protein is RNA-splicing ligase RtcB homolog of Danio rerio (Zebrafish).